The primary structure comprises 429 residues: Enolase (429 aa).

Q162 is a (2R)-2-phosphoglycerate binding site. Residue E204 is the Proton donor of the active site. Residues D242, E289, and D316 each contribute to the Mg(2+) site. The (2R)-2-phosphoglycerate site is built by K341, R370, S371, and K392. K341 acts as the Proton acceptor in catalysis.

Belongs to the enolase family. Mg(2+) is required as a cofactor.

The protein resides in the cytoplasm. It localises to the secreted. It is found in the cell surface. The enzyme catalyses (2R)-2-phosphoglycerate = phosphoenolpyruvate + H2O. It functions in the pathway carbohydrate degradation; glycolysis; pyruvate from D-glyceraldehyde 3-phosphate: step 4/5. Catalyzes the reversible conversion of 2-phosphoglycerate (2-PG) into phosphoenolpyruvate (PEP). It is essential for the degradation of carbohydrates via glycolysis. This is Enolase from Flavobacterium psychrophilum (strain ATCC 49511 / DSM 21280 / CIP 103535 / JIP02/86).